We begin with the raw amino-acid sequence, 75 residues long: uncharacterized protein (75 aa).

This is an uncharacterized protein from Mycobacterium tuberculosis (strain CDC 1551 / Oshkosh).